Consider the following 185-residue polypeptide: ATP synthase subunit b, chloroplastic (185 aa).

The helical transmembrane segment at 27 to 49 threads the bilayer; sequence LATNPINLSVVLGVLIFFGKGVL.

Belongs to the ATPase B chain family. F-type ATPases have 2 components, F(1) - the catalytic core - and F(0) - the membrane proton channel. F(1) has five subunits: alpha(3), beta(3), gamma(1), delta(1), epsilon(1). F(0) has four main subunits: a(1), b(1), b'(1) and c(10-14). The alpha and beta chains form an alternating ring which encloses part of the gamma chain. F(1) is attached to F(0) by a central stalk formed by the gamma and epsilon chains, while a peripheral stalk is formed by the delta, b and b' chains.

Its subcellular location is the plastid. It is found in the chloroplast thylakoid membrane. Functionally, f(1)F(0) ATP synthase produces ATP from ADP in the presence of a proton or sodium gradient. F-type ATPases consist of two structural domains, F(1) containing the extramembraneous catalytic core and F(0) containing the membrane proton channel, linked together by a central stalk and a peripheral stalk. During catalysis, ATP synthesis in the catalytic domain of F(1) is coupled via a rotary mechanism of the central stalk subunits to proton translocation. In terms of biological role, component of the F(0) channel, it forms part of the peripheral stalk, linking F(1) to F(0). The polypeptide is ATP synthase subunit b, chloroplastic (Vitis vinifera (Grape)).